Consider the following 418-residue polypeptide: MIHSLFLINCSGDIFLEKHWKSVVSQSVCDYFFEAQEKAADVENVPTVISTPHHYLISIYRDKLFFVSVIQTEVPPLFVIEFLHRVADTFQDYFGECSEAAIKDNVVIVYELLEEMLDNGFPLATESNILKELIKPPTILRSVVNSITGSSNVGDTLPTGQLSNIPWRRAGVKYTNNEAYFDVVEEIDAIIDKSGSTVFAEIQGVIDACIKLSGMPDLSLSFMNPRLLDDVSFHPCIRFKRWESERVLSFIPPDGNFRLISYRVSSQNLVAIPVYVKHNISFKENSSCGRFDITIGPKQNMGKTIEGITVTVHMPKVVLNMNLTPTQGSYTFDPVTKVLAWDVGKITPQKLPSLKGLVNLQSGAPKPEENPNLNIQFKIQQLAISGLKVNRLDMYGEKYKPFKGVKYITKAGKFQVRT.

Residues 176-417 enclose the MHD domain; sequence NNEAYFDVVE…ITKAGKFQVR (242 aa).

It belongs to the adaptor complexes medium subunit family. Adaptor protein complex 3 (AP-3) is a heterotetramer composed of two large adaptins (delta-type subunit AP3D1 and beta-type subunit AP3B1 or AP3B2), a medium adaptin (mu-type subunit AP3M1 or AP3M2) and a small adaptin (sigma-type subunit APS1 or AP3S2). Interacts with AGAP1. AP-3 associates with the BLOC-1 complex.

Its subcellular location is the golgi apparatus. It localises to the cytoplasmic vesicle membrane. Part of the AP-3 complex, an adaptor-related complex which is not clathrin-associated. The complex is associated with the Golgi region as well as more peripheral structures. It facilitates the budding of vesicles from the Golgi membrane and may be directly involved in trafficking to lysosomes. In concert with the BLOC-1 complex, AP-3 is required to target cargos into vesicles assembled at cell bodies for delivery into neurites and nerve terminals. In Rattus norvegicus (Rat), this protein is AP-3 complex subunit mu-1 (Ap3m1).